The chain runs to 214 residues: Probable transaldolase (214 aa).

Lysine 83 functions as the Schiff-base intermediate with substrate in the catalytic mechanism.

The protein belongs to the transaldolase family. Type 3B subfamily.

It localises to the cytoplasm. The catalysed reaction is D-sedoheptulose 7-phosphate + D-glyceraldehyde 3-phosphate = D-erythrose 4-phosphate + beta-D-fructose 6-phosphate. It functions in the pathway carbohydrate degradation; pentose phosphate pathway; D-glyceraldehyde 3-phosphate and beta-D-fructose 6-phosphate from D-ribose 5-phosphate and D-xylulose 5-phosphate (non-oxidative stage): step 2/3. Transaldolase is important for the balance of metabolites in the pentose-phosphate pathway. The chain is Probable transaldolase from Clostridium botulinum (strain Alaska E43 / Type E3).